Consider the following 228-residue polypeptide: ATP-dependent dethiobiotin synthetase BioD 1 (228 aa).

Residue 13-18 (EVGKTV) coordinates ATP. Thr-17 lines the Mg(2+) pocket. The active site involves Lys-38. Residue Ser-42 participates in substrate binding. ATP contacts are provided by residues Asp-55, 116-119 (EGAG), 176-177 (ND), and 205-207 (PWL). Residues Asp-55 and Glu-116 each coordinate Mg(2+).

The protein belongs to the dethiobiotin synthetase family. In terms of assembly, homodimer. It depends on Mg(2+) as a cofactor.

It is found in the cytoplasm. It catalyses the reaction (7R,8S)-7,8-diammoniononanoate + CO2 + ATP = (4R,5S)-dethiobiotin + ADP + phosphate + 3 H(+). The protein operates within cofactor biosynthesis; biotin biosynthesis; biotin from 7,8-diaminononanoate: step 1/2. In terms of biological role, catalyzes a mechanistically unusual reaction, the ATP-dependent insertion of CO2 between the N7 and N8 nitrogen atoms of 7,8-diaminopelargonic acid (DAPA, also called 7,8-diammoniononanoate) to form a ureido ring. The polypeptide is ATP-dependent dethiobiotin synthetase BioD 1 (Salmonella typhimurium (strain LT2 / SGSC1412 / ATCC 700720)).